The primary structure comprises 255 residues: Hydroxyacylglutathione hydrolase (255 aa).

7 residues coordinate Zn(2+): His-56, His-58, Asp-60, His-61, His-112, Asp-129, and His-167.

Belongs to the metallo-beta-lactamase superfamily. Glyoxalase II family. In terms of assembly, monomer. The cofactor is Zn(2+).

It catalyses the reaction an S-(2-hydroxyacyl)glutathione + H2O = a 2-hydroxy carboxylate + glutathione + H(+). The protein operates within secondary metabolite metabolism; methylglyoxal degradation; (R)-lactate from methylglyoxal: step 2/2. Thiolesterase that catalyzes the hydrolysis of S-D-lactoyl-glutathione to form glutathione and D-lactic acid. The chain is Hydroxyacylglutathione hydrolase from Pseudomonas fluorescens (strain SBW25).